The sequence spans 163 residues: 3-hydroxyacyl-[acyl-carrier-protein] dehydratase FabZ (163 aa).

Residue His-58 is part of the active site.

Belongs to the thioester dehydratase family. FabZ subfamily.

Its subcellular location is the cytoplasm. It carries out the reaction a (3R)-hydroxyacyl-[ACP] = a (2E)-enoyl-[ACP] + H2O. Functionally, involved in unsaturated fatty acids biosynthesis. Catalyzes the dehydration of short chain beta-hydroxyacyl-ACPs and long chain saturated and unsaturated beta-hydroxyacyl-ACPs. This is 3-hydroxyacyl-[acyl-carrier-protein] dehydratase FabZ from Francisella tularensis subsp. tularensis (strain FSC 198).